The following is a 364-amino-acid chain: Mannose-1-phosphate guanyltransferase (364 aa).

Belongs to the transferase hexapeptide repeat family.

It is found in the cytoplasm. The enzyme catalyses alpha-D-mannose 1-phosphate + GTP + H(+) = GDP-alpha-D-mannose + diphosphate. Its pathway is nucleotide-sugar biosynthesis; GDP-alpha-D-mannose biosynthesis; GDP-alpha-D-mannose from alpha-D-mannose 1-phosphate (GTP route): step 1/1. In terms of biological role, involved in cell wall synthesis where it is required for glycosylation. Involved in cell cycle progression through cell-size checkpoint. The protein is Mannose-1-phosphate guanyltransferase (mpg1) of Aspergillus fumigatus (strain ATCC MYA-4609 / CBS 101355 / FGSC A1100 / Af293) (Neosartorya fumigata).